A 692-amino-acid polypeptide reads, in one-letter code: Formate hydrogenlyase transcriptional activator (692 aa).

The 143-residue stretch at 202–344 (DIDELVSEVA…QIAERVAIAV (143 aa)) folds into the GAF domain. The 230-residue stretch at 381-610 (IIGRSEAMYN…LENVVERAVL (230 aa)) folds into the Sigma-54 factor interaction domain. Residues 409-416 (GETGTGKE) and 472-481 (ADKSSLFLDE) each bind ATP. A DNA-binding region (H-T-H motif) is located at residues 663–682 (PKGAAQRLGLKRTTLLSRMK).

Functionally, required for induction of expression of the formate dehydrogenase H and hydrogenase-3 structural genes. The polypeptide is Formate hydrogenlyase transcriptional activator (fhlA) (Salmonella typhimurium (strain LT2 / SGSC1412 / ATCC 700720)).